The sequence spans 157 residues: Peptide methionine sulfoxide reductase MsrA (157 aa).

The active site involves Cys-10.

It belongs to the MsrA Met sulfoxide reductase family.

The catalysed reaction is L-methionyl-[protein] + [thioredoxin]-disulfide + H2O = L-methionyl-(S)-S-oxide-[protein] + [thioredoxin]-dithiol. It catalyses the reaction [thioredoxin]-disulfide + L-methionine + H2O = L-methionine (S)-S-oxide + [thioredoxin]-dithiol. Functionally, has an important function as a repair enzyme for proteins that have been inactivated by oxidation. Catalyzes the reversible oxidation-reduction of methionine sulfoxide in proteins to methionine. The sequence is that of Peptide methionine sulfoxide reductase MsrA from Clostridium perfringens (strain ATCC 13124 / DSM 756 / JCM 1290 / NCIMB 6125 / NCTC 8237 / Type A).